A 466-amino-acid chain; its full sequence is uncharacterized protein (466 aa).

The disordered stretch occupies residues 1 to 22; the sequence is MKKNNERVNTNPSLISKSYNMK. Positions 7-19 are enriched in polar residues; that stretch reads RVNTNPSLISKSY. 2 positions are modified to phosphoserine: serine 40 and serine 42. The region spanning 108-183 is the RRM domain; the sequence is YFVHMDNISP…RLISATITNH (76 aa). The segment at 186 to 207 is disordered; it reads RLPNAEHLESSTKTKDESQDKD. Positions 188-207 are enriched in basic and acidic residues; the sequence is PNAEHLESSTKTKDESQDKD. The region spanning 209 to 368 is the CID domain; that stretch reads LTKLDRAKLE…RAWRNFSGNT (160 aa). Residue serine 371 is modified to Phosphoserine. The segment covering 425 to 436 has biased composition (low complexity); it reads STETSSSSSPQP. The tract at residues 425–448 is disordered; sequence STETSSSSSPQPTEERKAKFKPSF.

It localises to the nucleus. It is found in the cytoplasm. This is an uncharacterized protein from Schizosaccharomyces pombe (strain 972 / ATCC 24843) (Fission yeast).